We begin with the raw amino-acid sequence, 342 residues long: Zinc transporter ZIP11 (342 aa).

7 consecutive transmembrane segments (helical) span residues 12-32 (LLGTFFTWGMTAAGAALVFVF), 44-64 (LGFAAGVMLAASYWSLLAPAV), 72-92 (GFGAFAFFPVAVGFTLGAAFV), 194-214 (IALLILAITIHNVPEGLAVGV), 263-285 (FWYGQLSGMVEPLAGVFGAFAVV), 290-307 (ILPYALAFAAGAMVYVVM), and 322-342 (LASWASILGFVVMMSLDVGLG).

This sequence belongs to the ZIP transporter (TC 2.A.5) family.

The protein resides in the cell membrane. It is found in the nucleus. It localises to the cytoplasm. The protein localises to the golgi apparatus. The catalysed reaction is Zn(2+)(in) = Zn(2+)(out). The enzyme catalyses Cu(2+)(in) = Cu(2+)(out). Zinc importer that regulates cytosolic zinc concentrations either via zinc influx from the extracellular compartment or efflux from intracellular organelles such as Golgi apparatus. May transport copper ions as well. The transport mechanism remains to be elucidated. In Homo sapiens (Human), this protein is Zinc transporter ZIP11 (SLC39A11).